The chain runs to 223 residues: Ribonuclease 3 (223 aa).

One can recognise an RNase III domain in the interval 3–125 (LERLQKKLGY…IIAAIYLDAG (123 aa)). Glu-38 serves as a coordination point for Mg(2+). Asp-42 is a catalytic residue. The Mg(2+) site is built by Asp-111 and Glu-114. Glu-114 is a catalytic residue. The 71-residue stretch at 152 to 222 (DPKTRLQEFL…AEQVLAKLTT (71 aa)) folds into the DRBM domain.

The protein belongs to the ribonuclease III family. In terms of assembly, homodimer. Mg(2+) serves as cofactor.

It localises to the cytoplasm. It carries out the reaction Endonucleolytic cleavage to 5'-phosphomonoester.. Its function is as follows. Digests double-stranded RNA. Involved in the processing of primary rRNA transcript to yield the immediate precursors to the large and small rRNAs (23S and 16S). Processes some mRNAs, and tRNAs when they are encoded in the rRNA operon. Processes pre-crRNA and tracrRNA of type II CRISPR loci if present in the organism. The chain is Ribonuclease 3 from Actinobacillus pleuropneumoniae serotype 3 (strain JL03).